Here is a 610-residue protein sequence, read N- to C-terminus: Elongation factor 4 (610 aa).

In terms of domain architecture, tr-type G spans 11-193; it reads EKIRNFSIIA…QIVEKVPAPT (183 aa). GTP-binding positions include 23-28 and 140-143; these read DHGKST and NKID.

This sequence belongs to the TRAFAC class translation factor GTPase superfamily. Classic translation factor GTPase family. LepA subfamily.

The protein localises to the cell membrane. The catalysed reaction is GTP + H2O = GDP + phosphate + H(+). Required for accurate and efficient protein synthesis under certain stress conditions. May act as a fidelity factor of the translation reaction, by catalyzing a one-codon backward translocation of tRNAs on improperly translocated ribosomes. Back-translocation proceeds from a post-translocation (POST) complex to a pre-translocation (PRE) complex, thus giving elongation factor G a second chance to translocate the tRNAs correctly. Binds to ribosomes in a GTP-dependent manner. This Streptococcus pyogenes serotype M2 (strain MGAS10270) protein is Elongation factor 4.